The primary structure comprises 491 residues: Cobyric acid synthase (491 aa).

The region spanning 250-437 is the GATase cobBQ-type domain; that stretch reads RLRVVVPVLP…LHGIFDHPAA (188 aa). Cysteine 331 acts as the Nucleophile in catalysis. Histidine 429 is an active-site residue.

The protein belongs to the CobB/CobQ family. CobQ subfamily.

Its pathway is cofactor biosynthesis; adenosylcobalamin biosynthesis. Functionally, catalyzes amidations at positions B, D, E, and G on adenosylcobyrinic A,C-diamide. NH(2) groups are provided by glutamine, and one molecule of ATP is hydrogenolyzed for each amidation. In Xanthomonas campestris pv. campestris (strain B100), this protein is Cobyric acid synthase.